Here is a 188-residue protein sequence, read N- to C-terminus: MGANEDQEMELEALRSIYEGDESFRELSPVSFQYRIGEDGDPKAFLIEISWTETYPQTPPVISMNAFFNNTISSAVKQSILAKLQEAVEVNLGTAMTYTLFEYAKDNKEQFMENHHPGSSTTPIANIISVETPSAAPSSKKKDKKEQLSKAQKRKLADKTDHKGELPRGWNWVDVVKHLSKSGSKDDE.

Residues 9–111 (MELEALRSIY…EYAKDNKEQF (103 aa)) enclose the RWD domain. A disordered region spans residues 132–167 (TPSAAPSSKKKDKKEQLSKAQKRKLADKTDHKGELP). Over residues 155–166 (KLADKTDHKGEL) the composition is skewed to basic and acidic residues.

In Rattus norvegicus (Rat), this protein is RWD domain-containing protein 4 (Rwdd4).